The sequence spans 1680 residues: RAF-like serine/threonine-protein kinase PRAF (1680 aa).

The disordered stretch occupies residues 86-163 (FSPSDPHNSV…TPSDDGKDFP (78 aa)). Positions 166–267 (RVKFMCSFGG…SRLRVFLFPA (102 aa)) constitute a PB1 domain. Disordered regions lie at residues 363 to 388 (LTGNLSNRSNAPSAPSSAPSSPPLLA), 417 to 516 (PQYT…DSQQ), 556 to 580 (PDMLQSSGAQPAVSGQQQQGYQPQQ), 594 to 613 (GANHEGAYRQGDQQQQSQQF), 641 to 672 (QSTSYHGSAPSSPRPGFRELPSRHLPGGPQLQ), 700 to 725 (RSFRLSSSPPRYRDHHPHSEERLHRQ), and 1186 to 1226 (LPNA…LGGQ). Residues 366-388 (NLSNRSNAPSAPSSAPSSPPLLA) are compositionally biased toward low complexity. Positions 446–482 (HEMHYRSTDSRRGPESPPKKFHDALHQDHPITVEQRR) are enriched in basic and acidic residues. Low complexity-rich tracts occupy residues 560-580 (QSSGAQPAVSGQQQQGYQPQQ) and 603-613 (QGDQQQQSQQF). The segment covering 641-651 (QSTSYHGSAPS) has biased composition (polar residues). Residues 1204-1217 (SRSSSSSLSELSKS) are compositionally biased toward low complexity. The residue at position 1248 (S1248) is a Phosphoserine. Residues 1339–1354 (ASTVDKENQEEVRTGL) are compositionally biased toward basic and acidic residues. The tract at residues 1339–1372 (ASTVDKENQEEVRTGLDEPADEDKANSTGLGSDP) is disordered. The residue at position 1365 (S1365) is a Phosphoserine. The 267-residue stretch at 1389–1655 (LEELRELGSG…SDIAKELRTM (267 aa)) folds into the Protein kinase domain. Residues 1395-1403 (LGSGTFGTV) and K1416 contribute to the ATP site. Catalysis depends on D1518, which acts as the Proton acceptor. The tract at residues 1661–1680 (PKTQAQTQGQSHPHPQMQIV) is disordered.

This sequence belongs to the protein kinase superfamily. Ser/Thr protein kinase family. Post-translationally, hyperphosphorylated in response to auxin. Its phosphorylation state is also rapidly stimulated by photosynthetic activity (e.g. in response to blue light and red light irradiation); dephosphorylated in the darkness.

It localises to the cytoplasm. The enzyme catalyses L-seryl-[protein] + ATP = O-phospho-L-seryl-[protein] + ADP + H(+). It carries out the reaction L-threonyl-[protein] + ATP = O-phospho-L-threonyl-[protein] + ADP + H(+). Activated by auxin via rapid phosphorylation. Regulated by photosynthesis-activity-dependent changes in its phosphorylation status. Functionally, RAF-like protein kinase acting as a central mediator of a fast response pathway to auxin involving proteins phosphorylation, and leading to rapid cellular responses including membrane depolarization and cytoplasmic streaming. Required for general growth and developmental process. Photosynthesis signaling kinase involved in the regulation of the sucrose metabolism involving PGM1. Necessary for optimal chloroplast electron transport rate (ETR). The protein is RAF-like serine/threonine-protein kinase PRAF of Marchantia polymorpha (Common liverwort).